Here is a 232-residue protein sequence, read N- to C-terminus: T-cell surface glycoprotein CD1b-3 (232 aa).

Topologically, residues 1–201 (GLQEFQFEYP…LYWGHPMYIG (201 aa)) are extracellular. Cystine bridges form between C19/C83, C48/C62, and C123/C178. The N-linked (GlcNAc...) asparagine glycan is linked to N45. An Ig-like domain is found at 84 to 194 (PRYLLGVLDA…LGDQDIILYW (111 aa)). The helical transmembrane segment at 202-222 (LIFVAIIVPSLILLICLALWF) threads the bilayer. The Cytoplasmic portion of the chain corresponds to 223 to 232 (WRRWSYQTVL).

As to quaternary structure, heterodimer with B2M (beta-2-microglobulin). Interacts with saposin C.

The protein localises to the cell membrane. It localises to the endosome membrane. It is found in the lysosome membrane. Functionally, antigen-presenting protein that binds self and non-self lipid and glycolipid antigens and presents them to T-cell receptors on natural killer T-cells. The sequence is that of T-cell surface glycoprotein CD1b-3 from Ovis aries (Sheep).